The chain runs to 57 residues: Sperm histone (57 aa).

The interval 1–57 (MARYRRTRTRSRSRRRRRSRRRRSSRRRRYGRSRRSYRSVGRRRRRYGRRRRRRRRY) is disordered. A Phosphothreonine modification is found at T9.

Belongs to the protamine P1 family. In terms of tissue distribution, testis.

The protein localises to the nucleus. It is found in the chromosome. Protamines substitute for histones in the chromatin of sperm during the haploid phase of spermatogenesis. They compact sperm DNA into a highly condensed, stable and inactive complex. This is Sperm histone from Coturnix japonica (Japanese quail).